A 352-amino-acid chain; its full sequence is Probable dual-specificity RNA methyltransferase RlmN (352 aa).

Glu-99 serves as the catalytic Proton acceptor. The 221-residue stretch at 105–325 (EGDRATLCIS…ESHGYTCTIR (221 aa)) folds into the Radical SAM core domain. A disulfide bridge links Cys-112 with Cys-336. [4Fe-4S] cluster-binding residues include Cys-119, Cys-123, and Cys-126. Residues 164–165 (GE), Ser-196, 217–219 (SLH), and His-293 each bind S-adenosyl-L-methionine. The active-site S-methylcysteine intermediate is Cys-336.

Belongs to the radical SAM superfamily. RlmN family. It depends on [4Fe-4S] cluster as a cofactor.

The protein resides in the cytoplasm. It catalyses the reaction adenosine(2503) in 23S rRNA + 2 reduced [2Fe-2S]-[ferredoxin] + 2 S-adenosyl-L-methionine = 2-methyladenosine(2503) in 23S rRNA + 5'-deoxyadenosine + L-methionine + 2 oxidized [2Fe-2S]-[ferredoxin] + S-adenosyl-L-homocysteine. The enzyme catalyses adenosine(37) in tRNA + 2 reduced [2Fe-2S]-[ferredoxin] + 2 S-adenosyl-L-methionine = 2-methyladenosine(37) in tRNA + 5'-deoxyadenosine + L-methionine + 2 oxidized [2Fe-2S]-[ferredoxin] + S-adenosyl-L-homocysteine. Specifically methylates position 2 of adenine 2503 in 23S rRNA and position 2 of adenine 37 in tRNAs. The polypeptide is Probable dual-specificity RNA methyltransferase RlmN (Porphyromonas gingivalis (strain ATCC 33277 / DSM 20709 / CIP 103683 / JCM 12257 / NCTC 11834 / 2561)).